A 235-amino-acid polypeptide reads, in one-letter code: MAYTSLTSSPLVSNVSVGGTSKINNNKVSAPCSVFVPSMRRPTTRLVARATGDNKDTSVDVHHSSAQGGNNQGTAVERRPTRMALDVSPFGVLDPMSPMRTMRQMIDTMDRLFEDTMTFPGRNRASGTGEIRTPWDIHDDENEIKMRFDMPGLSKEDVKVSVENDMLVIKGEHKKEEDGRDKHSWGRNYSSYDTRLSLPDNVVKDKIKAELKNGVLFISIPKTEVEKKVIDVQIN.

Disordered stretches follow at residues 1 to 23 and 51 to 80; these read MAYTSLTSSPLVSNVSVGGTSKI and TGDNKDTSVDVHHSSAQGGNNQGTAVERRP. Over residues 52 to 63 the composition is skewed to basic and acidic residues; that stretch reads GDNKDTSVDVHH. The span at 64–74 shows a compositional bias: polar residues; sequence SSAQGGNNQGT. The sHSP domain maps to 126-235; sequence SGTGEIRTPW…EKKVIDVQIN (110 aa).

This sequence belongs to the small heat shock protein (HSP20) family. In fruits, flowers, leaves, and stems.

It localises to the plastid. It is found in the chloroplast. This is Small heat shock protein, chloroplastic (HSP21) from Solanum lycopersicum (Tomato).